Here is a 313-residue protein sequence, read N- to C-terminus: MEPNVRFWITERQSFIQRFLQWTELLDPTNLVLSIEKIEKSRQLLLTNEDASRGDLEDKRIQEAWKRSLSTVHPDNSRLIPGPFRPAALLPFTAPTLFLSMLPVKSLKSMILPQASFYTYSTAFNIVNGNASYDRRAHESLLLGAGVIVSSTFLGLFPRLLQVRLSMNSVLSRNFIPVIILAQLSGMNVIASRSLEPMRGIEVMDKEGNVIGYSRKAGTKAVKDTATSRVVLFGTSAFIPEVFAYFFKRTQFFLQNPWSLWTLKLSCTVLVMGLMVPVSFSVFPQIGRIQCNELEKEIQSATEETELFYNRGV.

The next 5 helical transmembrane spans lie at 87–107, 141–161, 175–191, 230–247, and 269–289; these read AALLPFTAPTLFLSMLPVKSL, LLLGAGVIVSSTFLGLFPRLL, FIPVIILAQLSGMNVIA, VVLFGTSAFIPEVFAYFF, and VLVMGLMVPVSFSVFPQIGRI.

Belongs to the sideroflexin family.

It localises to the mitochondrion inner membrane. Functionally, mitochondrial amino-acid transporter. Does not act as a serine transporter: not able to mediate transport of serine into mitochondria. The protein is Sideroflexin-4 of Bos taurus (Bovine).